A 227-amino-acid chain; its full sequence is 7-cyano-7-deazaguanine synthase (227 aa).

8–18 (LSGGLDSATVL) is an ATP binding site. 4 residues coordinate Zn(2+): Cys-191, Cys-201, Cys-204, and Cys-207.

It belongs to the QueC family. It depends on Zn(2+) as a cofactor.

The enzyme catalyses 7-carboxy-7-deazaguanine + NH4(+) + ATP = 7-cyano-7-deazaguanine + ADP + phosphate + H2O + H(+). It functions in the pathway purine metabolism; 7-cyano-7-deazaguanine biosynthesis. Functionally, catalyzes the ATP-dependent conversion of 7-carboxy-7-deazaguanine (CDG) to 7-cyano-7-deazaguanine (preQ(0)). The chain is 7-cyano-7-deazaguanine synthase from Paramagnetospirillum magneticum (strain ATCC 700264 / AMB-1) (Magnetospirillum magneticum).